The primary structure comprises 488 residues: Cytochrome P450 monooxygenase orf2 (488 aa).

A helical membrane pass occupies residues 7–27; sequence LPGIFLPLAGCVLALSLTTIV. C432 is a binding site for heme.

This sequence belongs to the cytochrome P450 family. Requires heme as cofactor.

Its subcellular location is the membrane. It functions in the pathway secondary metabolite biosynthesis. In terms of biological role, cytochrome P450 monooxygenase; part of the gene cluster that mediates the biosynthesis of nigerpyrone and its derivatives carbonarone A and pestalamide A. The biosynthesis pathway begins with the polyketide assembly by epaA to form phenylacetyl triketide precursor from successive condensation of two malonyl-CoA, presumably with one phenylacetyl-CoA starter unit produced by the phenylacetyl-CoA ligase epaB. For the nigerpyrone biosynthesis, the reactive polyketide chain is released as an aldehyde through the R-domain. A nonenzymatic cyclization and dehydration may create nigerpyrone. For the biosynthesis of carbonarone A and pestalamide A, an extra methyl group is added through the C-methyltransferase domain. Several further steps involving the dehydrogenase orf1, the cytochrome P450 monooxygenase orf2 and the FAD-dependent monooxygenase orf3 are required to form a carbonarone A precursor which is converted to carbonarone A via cyclization. The O-acetyltransferase epaC could catalyze the transfer of 2-methylsuccinyl-CoA, a common intermediate in the ethylmalonyl-CoA pathway, to generate the final product pestalamide A. In Aspergillus niger (strain ATCC MYA-4892 / CBS 513.88 / FGSC A1513), this protein is Cytochrome P450 monooxygenase orf2.